The chain runs to 517 residues: Protein disulfide-isomerase A5 (517 aa).

A signal peptide spans 1 to 21 (MARAWGLLLAIGVVLPTWLSS). Cystine bridges form between C83/C92, C180/C183, C303/C306, and C424/C427. 3 consecutive Thioredoxin domains span residues 132–259 (FLKD…NPLP), 268–382 (PWAD…NPEA), and 376–504 (WMQN…TLRE). The Prevents secretion from ER motif lies at 514 to 517 (REEL).

It belongs to the protein disulfide isomerase family. Interacts with CALR (via P-domain).

It is found in the endoplasmic reticulum lumen. The catalysed reaction is Catalyzes the rearrangement of -S-S- bonds in proteins.. The polypeptide is Protein disulfide-isomerase A5 (Pdia5) (Mus musculus (Mouse)).